The following is a 770-amino-acid chain: Potassium transporter 25 (770 aa).

The Cytoplasmic segment spans residues 1–23; the sequence is MDLEAAHGAAAAPGKRRRRARES. A helical membrane pass occupies residues 24 to 44; sequence WGASLLLAYQSLGVVYGDVAT. Over 45–70 the chain is Extracellular; it reads SPLYVYKSAFAGDDIQHSAGNEEIYG. Residues 71-91 form a helical membrane-spanning segment; it reads VLSFVFWTLTLISLVKYVLIV. The Cytoplasmic segment spans residues 92-152; sequence LRADDGGEGG…MLERYRVLQR (61 aa). A helical membrane pass occupies residues 153-173; that stretch reads LLLLFALLGTCMVIGDGVLTP. Topologically, residues 174–194 are extracellular; that stretch reads AVSVYSAVSGLELSMEHEHHK. A helical transmembrane segment spans residues 195–215; the sequence is YVQLPVTCAILIGLFALQHYG. The Cytoplasmic segment spans residues 216 to 218; sequence THR. The chain crosses the membrane as a helical span at residues 219–239; sequence VGFIFAPIVCVWLLCISAIGV. The Extracellular portion of the chain corresponds to 240–267; the sequence is YNIVHWNHHVYRALSPYYMYQFLKKTQT. A helical transmembrane segment spans residues 268–288; it reads GGWMSLGGILLCVTGSEAMYA. Residues 289–299 are Cytoplasmic-facing; the sequence is DLGHFSQSSIK. A helical transmembrane segment spans residues 300 to 320; sequence IAFMSVVYPALVLAYMGQAAY. The Extracellular segment spans residues 321–346; that stretch reads ISQHHSFENAYHIGFYVSVPEKLRWP. A helical membrane pass occupies residues 347–367; that stretch reads VLVIAILAAVVGSQAVITGTF. At 368 to 394 the chain is on the cytoplasmic side; it reads SIIKQCSSLSCFPGVKIVHTSSTVHGQ. The helical transmembrane segment at 395–415 threads the bilayer; it reads IYIPEINWILMILCLAVTLGF. Residues 416 to 425 lie on the Extracellular side of the membrane; it reads RNTKHLANAQ. Residues 426-446 traverse the membrane as a helical segment; sequence GLAVITVMLVTTCLMSLVIVL. Over 447 to 451 the chain is Cytoplasmic; that stretch reads CWNKS. Residues 452–472 traverse the membrane as a helical segment; sequence IFLALGFLIFFGTIEVLYFSA. Over 473–479 the chain is Extracellular; sequence SLVKFHE. A helical transmembrane segment spans residues 480–500; the sequence is GAWVPITLSFIFMIVMCVWHY. Over 501 to 770 the chain is Cytoplasmic; the sequence is GTIKKYEFDF…TLEVGMVYQV (270 aa).

The protein belongs to the HAK/KUP transporter (TC 2.A.72.3) family.

Its subcellular location is the membrane. In terms of biological role, high-affinity potassium transporter. This chain is Potassium transporter 25 (HAK25), found in Oryza sativa subsp. japonica (Rice).